The chain runs to 478 residues: MGCSWRKTLSFFLVFVPIYLHGASSQEAAPVGPRKPFFERLRRLEEQFRRFQEVTWTHLQNIASNYNVSYNVDVRFRSLAEESQAVAQAVNRSQASVQGELAQLKAWVRKLQRRGRKVDTRLRALDLTLGERSQQRARERKAHKAQRDALQDSLARLEGLVHSQGARLAALEGRLPVAHPGTAALGPALVPTPTQPEELGPTSLKLQRDRQELRAASEHRGPPQDSSAPLQGRREPPASGSHRVLSGTAPKDPRQQAWSPQVPGEICGVGPTLVFPNASTRNVVFLSPGFVTALRALSFCSWVRTASGRLGTLLSYATEDNDNKLVLHGRDSLLPGSIHFVIGDPAFRELPLQLLLDGQWHHICVIWTSTQGRYWLHVDRRLVATGSRFREGYEIPPGGSLVLGQEQDSVGGGFDSSEAFVGSMSGLAIWDRALVPGEVANLAIGKEFPTGAILTLANAALAGGFVQGANCTCLERCP.

The signal sequence occupies residues 1–25; that stretch reads MGCSWRKTLSFFLVFVPIYLHGASS. N-linked (GlcNAc...) asparagine glycosylation is found at N67 and N91. Basic and acidic residues predominate over residues 208–222; the sequence is RDRQELRAASEHRGP. The tract at residues 208 to 262 is disordered; it reads RDRQELRAASEHRGPPQDSSAPLQGRREPPASGSHRVLSGTAPKDPRQQAWSPQV. Residues 269-473 form the Pentraxin (PTX) domain; the sequence is VGPTLVFPNA…GFVQGANCTC (205 aa). An intrachain disulfide couples C300 to C364. The Ca(2+) site is built by D322, N323, E406, Q407, and D408.

Ca(2+) is required as a cofactor. In terms of tissue distribution, widely expressed at low levels with highest levels in small intestine, testis and brain. Very low expression in endothelial cells, monocytes, neutrophils and lymphocytes. Isoform 1 is not expressed in small intestine.

Its subcellular location is the secreted. The polypeptide is Pentraxin-4 (PTX4) (Homo sapiens (Human)).